Consider the following 126-residue polypeptide: Methylglyoxal synthase (126 aa).

In terms of domain architecture, MGS-like spans 1 to 126 (MEKKIALIAH…LIKGLESLIF (126 aa)). Residues H10, K14, 36-39 (TGTT), and 56-57 (SG) each bind substrate. The active-site Proton donor/acceptor is D62. H89 contributes to the substrate binding site.

Belongs to the methylglyoxal synthase family.

It catalyses the reaction dihydroxyacetone phosphate = methylglyoxal + phosphate. In terms of biological role, catalyzes the formation of methylglyoxal from dihydroxyacetone phosphate. The polypeptide is Methylglyoxal synthase (Borreliella burgdorferi (strain ATCC 35210 / DSM 4680 / CIP 102532 / B31) (Borrelia burgdorferi)).